The primary structure comprises 137 residues: Proofreading thioesterase EntH (137 aa).

The active-site Nucleophile or proton acceptor is the Glu63.

Belongs to the thioesterase PaaI family. In terms of assembly, homotetramer. Dimer of dimers. Interacts specifically with the aryl carrier protein (ArCP) domain of EntB.

The protein resides in the cytoplasm. It participates in siderophore biosynthesis; enterobactin biosynthesis. In terms of biological role, required for optimal enterobactin synthesis. Acts as a proofreading enzyme that prevents EntB misacylation by hydrolyzing the thioester bound existing between EntB and wrongly charged molecules. The polypeptide is Proofreading thioesterase EntH (Escherichia coli O157:H7 (strain EC4115 / EHEC)).